Consider the following 507-residue polypeptide: Glycerol kinase (507 aa).

Threonine 13 lines the ADP pocket. ATP is bound by residues threonine 13, threonine 14, and serine 15. Residue threonine 13 coordinates sn-glycerol 3-phosphate. Arginine 17 provides a ligand contact to ADP. Residues arginine 83, glutamate 84, tyrosine 135, and aspartate 245 each coordinate sn-glycerol 3-phosphate. Glycerol is bound by residues arginine 83, glutamate 84, tyrosine 135, aspartate 245, and glutamine 246. Residues threonine 267 and glycine 310 each coordinate ADP. ATP-binding residues include threonine 267, glycine 310, glutamine 314, and glycine 411. Residues glycine 411 and asparagine 415 each coordinate ADP.

The protein belongs to the FGGY kinase family.

It catalyses the reaction glycerol + ATP = sn-glycerol 3-phosphate + ADP + H(+). It functions in the pathway polyol metabolism; glycerol degradation via glycerol kinase pathway; sn-glycerol 3-phosphate from glycerol: step 1/1. With respect to regulation, inhibited by fructose 1,6-bisphosphate (FBP). Its function is as follows. Key enzyme in the regulation of glycerol uptake and metabolism. Catalyzes the phosphorylation of glycerol to yield sn-glycerol 3-phosphate. The chain is Glycerol kinase from Halorhodospira halophila (strain DSM 244 / SL1) (Ectothiorhodospira halophila (strain DSM 244 / SL1)).